A 154-amino-acid polypeptide reads, in one-letter code: Aminoalkylphosphonate N-acetyltransferase (154 aa).

The region spanning 14-154 (CELRHATTED…QSHFRFTKAL (141 aa)) is the N-acetyltransferase domain.

As to quaternary structure, homodimer. A divalent metal cation is required as a cofactor.

The catalysed reaction is aminomethylphosphonate + acetyl-CoA = 2-N-acetamidomethylphosphonate + CoA. It catalyses the reaction (S)-1-aminoethylphosphonate + acetyl-CoA = [(1S)-1-acetamidoethyl]phosphonate + CoA. Functionally, aminoalkylphosphonate N-acetyltransferase which is able to acetylate a range of aminoalkylphosphonic acids, including (S)-1-aminoethylphosphonate ((S)-1AEP) and 2-aminoethylphosphonate, using acetyl-CoA as acetyl donor. Its physiological role in S.typhimurium is unclear. However, by acetylating (S)-1AEP, PhnO would protect against the deleterious effects of (S)-1AEP, a structural analog of D-alanine that has antibacterial properties. The protein is Aminoalkylphosphonate N-acetyltransferase of Salmonella typhimurium (strain LT2 / SGSC1412 / ATCC 700720).